The following is a 136-amino-acid chain: ATP synthase epsilon chain (136 aa).

It belongs to the ATPase epsilon chain family. As to quaternary structure, F-type ATPases have 2 components, CF(1) - the catalytic core - and CF(0) - the membrane proton channel. CF(1) has five subunits: alpha(3), beta(3), gamma(1), delta(1), epsilon(1). CF(0) has three main subunits: a, b and c.

It localises to the cell inner membrane. Functionally, produces ATP from ADP in the presence of a proton gradient across the membrane. This Afipia carboxidovorans (strain ATCC 49405 / DSM 1227 / KCTC 32145 / OM5) (Oligotropha carboxidovorans) protein is ATP synthase epsilon chain.